Consider the following 134-residue polypeptide: UPF0412 protein YaaI (134 aa).

The signal sequence occupies residues 1 to 23; that stretch reads MKSVFTISASLAISLMLCCTAQA.

It belongs to the UPF0412 family.

The protein is UPF0412 protein YaaI of Shigella dysenteriae serotype 1 (strain Sd197).